The following is a 399-amino-acid chain: 4-hydroxy-3-methylbut-2-enyl diphosphate reductase (399 aa).

Residue cysteine 66 coordinates [4Fe-4S] cluster. Residue histidine 96 coordinates (2E)-4-hydroxy-3-methylbut-2-enyl diphosphate. A dimethylallyl diphosphate-binding site is contributed by histidine 96. Position 96 (histidine 96) interacts with isopentenyl diphosphate. Cysteine 157 contacts [4Fe-4S] cluster. Position 185 (histidine 185) interacts with (2E)-4-hydroxy-3-methylbut-2-enyl diphosphate. Position 185 (histidine 185) interacts with dimethylallyl diphosphate. Histidine 185 provides a ligand contact to isopentenyl diphosphate. Residue glutamate 187 is the Proton donor of the active site. Threonine 250 serves as a coordination point for (2E)-4-hydroxy-3-methylbut-2-enyl diphosphate. [4Fe-4S] cluster is bound at residue cysteine 288. (2E)-4-hydroxy-3-methylbut-2-enyl diphosphate-binding residues include serine 317, serine 318, asparagine 319, and serine 380. Positions 317, 318, 319, and 380 each coordinate dimethylallyl diphosphate. Isopentenyl diphosphate is bound by residues serine 317, serine 318, asparagine 319, and serine 380.

Belongs to the IspH family. The cofactor is [4Fe-4S] cluster.

The enzyme catalyses isopentenyl diphosphate + 2 oxidized [2Fe-2S]-[ferredoxin] + H2O = (2E)-4-hydroxy-3-methylbut-2-enyl diphosphate + 2 reduced [2Fe-2S]-[ferredoxin] + 2 H(+). It carries out the reaction dimethylallyl diphosphate + 2 oxidized [2Fe-2S]-[ferredoxin] + H2O = (2E)-4-hydroxy-3-methylbut-2-enyl diphosphate + 2 reduced [2Fe-2S]-[ferredoxin] + 2 H(+). Its pathway is isoprenoid biosynthesis; dimethylallyl diphosphate biosynthesis; dimethylallyl diphosphate from (2E)-4-hydroxy-3-methylbutenyl diphosphate: step 1/1. It functions in the pathway isoprenoid biosynthesis; isopentenyl diphosphate biosynthesis via DXP pathway; isopentenyl diphosphate from 1-deoxy-D-xylulose 5-phosphate: step 6/6. Functionally, catalyzes the conversion of 1-hydroxy-2-methyl-2-(E)-butenyl 4-diphosphate (HMBPP) into a mixture of isopentenyl diphosphate (IPP) and dimethylallyl diphosphate (DMAPP). Acts in the terminal step of the DOXP/MEP pathway for isoprenoid precursor biosynthesis. This Parasynechococcus marenigrum (strain WH8102) protein is 4-hydroxy-3-methylbut-2-enyl diphosphate reductase.